Consider the following 201-residue polypeptide: Small ribosomal subunit protein uS4 (201 aa).

An S4 RNA-binding domain is found at 91 to 157 (SRLDNVVYRA…VPFQIARETA (67 aa)).

Belongs to the universal ribosomal protein uS4 family. Part of the 30S ribosomal subunit. Contacts protein S5. The interaction surface between S4 and S5 is involved in control of translational fidelity.

Functionally, one of the primary rRNA binding proteins, it binds directly to 16S rRNA where it nucleates assembly of the body of the 30S subunit. With S5 and S12 plays an important role in translational accuracy. The sequence is that of Small ribosomal subunit protein uS4 from Mycolicibacterium paratuberculosis (strain ATCC BAA-968 / K-10) (Mycobacterium paratuberculosis).